The sequence spans 218 residues: Pyridoxine/pyridoxamine 5'-phosphate oxidase (218 aa).

Substrate is bound by residues 12–15 (RLSY) and Arg70. FMN-binding positions include 65–70 (RTVLLR), 80–81 (YT), Lys87, and Gln109. Tyr127, Arg131, and Ser135 together coordinate substrate. FMN is bound by residues 145 to 146 (QS) and Trp191. Position 197-199 (197-199 (RLH)) interacts with substrate. FMN is bound at residue Arg201.

This sequence belongs to the pyridoxamine 5'-phosphate oxidase family. In terms of assembly, homodimer. The cofactor is FMN.

It carries out the reaction pyridoxamine 5'-phosphate + O2 + H2O = pyridoxal 5'-phosphate + H2O2 + NH4(+). The enzyme catalyses pyridoxine 5'-phosphate + O2 = pyridoxal 5'-phosphate + H2O2. The protein operates within cofactor metabolism; pyridoxal 5'-phosphate salvage; pyridoxal 5'-phosphate from pyridoxamine 5'-phosphate: step 1/1. Its pathway is cofactor metabolism; pyridoxal 5'-phosphate salvage; pyridoxal 5'-phosphate from pyridoxine 5'-phosphate: step 1/1. Its function is as follows. Catalyzes the oxidation of either pyridoxine 5'-phosphate (PNP) or pyridoxamine 5'-phosphate (PMP) into pyridoxal 5'-phosphate (PLP). In Acinetobacter baumannii (strain SDF), this protein is Pyridoxine/pyridoxamine 5'-phosphate oxidase.